We begin with the raw amino-acid sequence, 211 residues long: Glycerol-3-phosphate acyltransferase (211 aa).

4 consecutive transmembrane segments (helical) span residues 5–25, 80–100, 112–132, and 138–158; these read ALGMMLIAYLCGSISSAILFC, PLYLGLTAIAACLGHIYPVFF, FGAIAPIGWDLTGLMTGTWLL, and GYSSLGAIVSALIAPFYVWWF.

This sequence belongs to the PlsY family. Probably interacts with PlsX.

Its subcellular location is the cell inner membrane. It catalyses the reaction an acyl phosphate + sn-glycerol 3-phosphate = a 1-acyl-sn-glycero-3-phosphate + phosphate. The protein operates within lipid metabolism; phospholipid metabolism. Its function is as follows. Catalyzes the transfer of an acyl group from acyl-phosphate (acyl-PO(4)) to glycerol-3-phosphate (G3P) to form lysophosphatidic acid (LPA). This enzyme utilizes acyl-phosphate as fatty acyl donor, but not acyl-CoA or acyl-ACP. The protein is Glycerol-3-phosphate acyltransferase of Pectobacterium carotovorum subsp. carotovorum (strain PC1).